Reading from the N-terminus, the 512-residue chain is MRRLIVTGIATSTAKGFRRVVNPNLLGGGAAARAFSDYREKLRTGFLHSIRFEDAFALFFEMVHSQPLPSIVDFTRLLTATANLRRYETVIYFSQKMELYGISHDLYSFTILIHCFCRCSRLSFALSVLGKMMKLGYEPSIVTFGSLLHGFCLVNRIGDAFSLVILMVKSGYEPNVVVYNTLIDGLCKNGELNIALELLNEMEKKGLGADVVTYNTLLTGLCYSGRWSDAARMLRDMMKRSINPDVVTFTALIDVFVKQGNLDEAQELYKEMIQSSVDPNNVTYNSIINGLCMHGRLYDAKKTFDLMASKGCFPNVVTYNTLISGFCKFRMVDEGMKLFQRMSCEGFNADIFTYNTLIHGYCQVGKLRVALDIFCWMVSRRVTPDIITHCILLHGLCVNGEIESALVKFDDMRESEKYIGIVAYNIMIHGLCKADKVEKAWELFCRLPVEGVKPDARTYTIMILGLCKNGPRREADELIRRMKEEGIICQMNAEDDHLEEHSSSNKEISLVS.

The N-terminal 34 residues, 1–34 (MRRLIVTGIATSTAKGFRRVVNPNLLGGGAAARA), are a transit peptide targeting the mitochondrion. 12 PPR repeats span residues 70–104 (SIVD…GISH), 105–139 (DLYS…GYEP), 140–174 (SIVT…GYEP), 175–209 (NVVV…GLGA), 210–244 (DVVT…SINP), 245–279 (DVVT…SVDP), 280–314 (NNVT…GCFP), 315–349 (NVVT…GFNA), 350–384 (DIFT…RVTP), 385–415 (DIIT…MRES), 420–454 (GIVA…GVKP), and 455–489 (DART…GIIC).

This sequence belongs to the PPR family. P subfamily.

It is found in the mitochondrion. In Arabidopsis thaliana (Mouse-ear cress), this protein is Pentatricopeptide repeat-containing protein At1g64583, mitochondrial.